The sequence spans 2936 residues: Neurobeachin (2936 aa).

The disordered stretch occupies residues 961–985 (ENIKKGKKGNVSTISGLSSQTAGAK). Positions 970 to 982 (NVSTISGLSSQTA) are enriched in polar residues. A phosphoserine mark is found at serine 1001 and serine 1004. Polar residues-rich tracts occupy residues 1203-1220 (TSDGVSSVSERELASSTK) and 1231-1241 (TLETESSNSKA). Disordered stretches follow at residues 1203–1222 (TSDGVSSVSERELASSTKGL), 1231–1265 (TLETESSNSKAVPNVDAGSIISDTERSDDGKESGK), and 1270–1289 (IQTTATTQAVQGRSSTQQDR). Residues 1253–1265 (DTERSDDGKESGK) show a composition bias toward basic and acidic residues. The span at 1270–1286 (IQTTATTQAVQGRSSTQ) shows a compositional bias: polar residues. A WD 1 repeat occupies 1316-1358 (TTMFRIPEFKWSPMHQRLLTDLLFALETDVHVWRSHSTKSVMD). Disordered stretches follow at residues 1480-1521 (QRDR…LSPI), 1639-1667 (PDTVKEKETPTPGEDIQLESSVPHTDSGM), 1701-1721 (VKKSQESLTEHPSEMLKPAPS), and 1830-1850 (TGAVDSGSSSSSSSSSFVNGA). At serine 1519 the chain carries Phosphoserine. Basic and acidic residues predominate over residues 1701-1714 (VKKSQESLTEHPSE). Residues serine 1704 and serine 1707 each carry the phosphoserine modification. Residues 1835 to 1845 (SGSSSSSSSSS) show a composition bias toward low complexity. Phosphoserine is present on serine 2128. In terms of domain architecture, BEACH-type PH spans 2137–2245 (NLAGPVVLST…TVKKVVYSLP (109 aa)). The BEACH domain maps to 2264–2553 (ATPRQLYKSS…QLLIEPHPPR (290 aa)). At serine 2565 the chain carries Phosphoserine. WD repeat units lie at residues 2708 to 2751 (GHWD…HIIG), 2768 to 2808 (GHDH…RALE), 2850 to 2889 (EINDSTRAILLSSDGQNLVTGGDNGVVEVWQACDFKQLYI), and 2892 to 2931 (GCDAGIRAMDLSHDQRTLITGMASGSIVAFNIDFNRWHYE).

It belongs to the WD repeat neurobeachin family. As to quaternary structure, interacts with RII subunit of PKA. In terms of tissue distribution, forebrain, brainstem and cerebellum.

It is found in the membrane. Its subcellular location is the endomembrane system. The protein resides in the postsynaptic cell membrane. Functionally, binds to type II regulatory subunits of protein kinase A and anchors/targets them to the membrane. May anchor the kinase to cytoskeletal and/or organelle-associated proteins. May have a role in membrane trafficking. This is Neurobeachin (Nbea) from Mus musculus (Mouse).